Consider the following 321-residue polypeptide: Annexin B10 (321 aa).

4 Annexin repeats span residues Phe15–Met86, Pro87–Thr158, Gly171–Glu243, and Ser247–Gly319.

This sequence belongs to the annexin family.

This is Annexin B10 (AnxB10) from Drosophila melanogaster (Fruit fly).